A 172-amino-acid chain; its full sequence is Shikimate kinase 2 (172 aa).

9–16 (GARAAGKT) serves as a coordination point for ATP.

Belongs to the shikimate kinase family.

It localises to the cytoplasm. It catalyses the reaction shikimate + ATP = 3-phosphoshikimate + ADP + H(+). It functions in the pathway metabolic intermediate biosynthesis; chorismate biosynthesis; chorismate from D-erythrose 4-phosphate and phosphoenolpyruvate: step 5/7. The protein is Shikimate kinase 2 of Syntrophotalea carbinolica (strain DSM 2380 / NBRC 103641 / GraBd1) (Pelobacter carbinolicus).